A 282-amino-acid chain; its full sequence is Succinate dehydrogenase [ubiquinone] iron-sulfur subunit, mitochondrial (282 aa).

The N-terminal 30 residues, 1-30 (MAAVVGVSLKRGFSATALGRVGLQFQACRE), are a transit peptide targeting the mitochondrion. An N6-acetyllysine mark is found at Lys53 and Lys57. The 2Fe-2S ferredoxin-type domain occupies 56 to 135 (DKPRMQTYKV…VSKIYPLPHM (80 aa)). Residues Cys95, Cys100, Cys103, and Cys115 each coordinate [2Fe-2S] cluster. The interaction with SDHAF1 stretch occupies residues 148–220 (FYAQYKSIEP…PAVLMQAYRW (73 aa)). Residues 178–208 (DREKLDGLYECILCACCSTSCPSYWWNGDKY) form the 4Fe-4S ferredoxin-type domain. Cys188, Cys191, and Cys194 together coordinate [4Fe-4S] cluster. A [3Fe-4S] cluster-binding site is contributed by Cys198. Residue Trp203 participates in a ubiquinone binding. Cys245 and Cys251 together coordinate [3Fe-4S] cluster. [4Fe-4S] cluster is bound at residue Cys255.

Belongs to the succinate dehydrogenase/fumarate reductase iron-sulfur protein family. As to quaternary structure, component of complex II composed of four subunits: the flavoprotein (FP) SDHA, iron-sulfur protein (IP) SDHB, and a cytochrome b560 composed of SDHC and SDHD. Interacts with SDHAF1; the interaction is required for iron-sulfur cluster incorporation into SDHB. Requires [2Fe-2S] cluster as cofactor. It depends on [3Fe-4S] cluster as a cofactor. [4Fe-4S] cluster is required as a cofactor.

Its subcellular location is the mitochondrion inner membrane. The enzyme catalyses a quinone + succinate = fumarate + a quinol. It carries out the reaction (R)-malate + a quinone = enol-oxaloacetate + a quinol. It catalyses the reaction (S)-malate + a quinone = enol-oxaloacetate + a quinol. It participates in carbohydrate metabolism; tricarboxylic acid cycle; fumarate from succinate (eukaryal route): step 1/1. Enol-oxaloacetate inhibits the succinate dehydrogenase activity. Functionally, iron-sulfur protein (IP) subunit of the succinate dehydrogenase complex (mitochondrial respiratory chain complex II), responsible for transferring electrons from succinate to ubiquinone (coenzyme Q). SDH also oxidizes malate to the non-canonical enol form of oxaloacetate, enol-oxaloacetate. Enol-oxaloacetate, which is a potent inhibitor of the succinate dehydrogenase activity, is further isomerized into keto-oxaloacetate. The chain is Succinate dehydrogenase [ubiquinone] iron-sulfur subunit, mitochondrial (Sdhb) from Rattus norvegicus (Rat).